The sequence spans 152 residues: Interleukin-3 (152 aa).

An N-terminal signal peptide occupies residues 1 to 19; sequence MSRLPVLLLLQLLVRPGLQ. Residues asparagine 34 and asparagine 89 are each glycosylated (N-linked (GlcNAc...) asparagine). Cysteines 35 and 103 form a disulfide.

This sequence belongs to the IL-3 family. In terms of assembly, monomer. In terms of tissue distribution, activated T-cells, mast cells, natural killer cells.

The protein resides in the secreted. Granulocyte/macrophage colony-stimulating factors are cytokines that act in hematopoiesis by controlling the production, differentiation, and function of 2 related white cell populations of the blood, the granulocytes and the monocytes-macrophages. In terms of biological role, this CSF induces granulocytes, macrophages, mast cells, stem cells, erythroid cells, eosinophils and megakaryocytes. The protein is Interleukin-3 (IL3) of Pan troglodytes (Chimpanzee).